The sequence spans 301 residues: Lipoyl synthase (301 aa).

7 residues coordinate [4Fe-4S] cluster: Cys53, Cys58, Cys64, Cys79, Cys83, Cys86, and Ser290. A Radical SAM core domain is found at 65-279; that stretch reads WSRKTATYML…RIYGKSIGFK (215 aa).

The protein belongs to the radical SAM superfamily. Lipoyl synthase family. [4Fe-4S] cluster is required as a cofactor.

It localises to the cytoplasm. The enzyme catalyses [[Fe-S] cluster scaffold protein carrying a second [4Fe-4S](2+) cluster] + N(6)-octanoyl-L-lysyl-[protein] + 2 oxidized [2Fe-2S]-[ferredoxin] + 2 S-adenosyl-L-methionine + 4 H(+) = [[Fe-S] cluster scaffold protein] + N(6)-[(R)-dihydrolipoyl]-L-lysyl-[protein] + 4 Fe(3+) + 2 hydrogen sulfide + 2 5'-deoxyadenosine + 2 L-methionine + 2 reduced [2Fe-2S]-[ferredoxin]. It participates in protein modification; protein lipoylation via endogenous pathway; protein N(6)-(lipoyl)lysine from octanoyl-[acyl-carrier-protein]: step 2/2. Catalyzes the radical-mediated insertion of two sulfur atoms into the C-6 and C-8 positions of the octanoyl moiety bound to the lipoyl domains of lipoate-dependent enzymes, thereby converting the octanoylated domains into lipoylated derivatives. In Leptospira interrogans serogroup Icterohaemorrhagiae serovar Lai (strain 56601), this protein is Lipoyl synthase.